Here is a 1523-residue protein sequence, read N- to C-terminus: Rho GTPase-activating protein gacHH (1523 aa).

3 Kelch repeats span residues 30–76 (DIVI…YGHS), 83–133 (KMFV…LIYD), and 135–184 (YILI…DISP). Polar residues-rich tracts occupy residues 161-173 (NSWT…SSTG) and 184-194 (PRSSTTTPTHQ). Positions 161–256 (NSWTKPSSNS…GGSPMTTPPT (96 aa)) are disordered. Low complexity predominate over residues 195 to 211 (SVNGSNSNSSSSSRVRS). Polar residues predominate over residues 212–221 (ATISSHNNSP). Over residues 227–244 (NNNNNNNNNSNNSNNSNN) the composition is skewed to low complexity. Kelch repeat units lie at residues 335 to 384 (KAFI…AIGS), 386 to 441 (LFIF…PISS), and 443 to 496 (ILII…PITS). Disordered regions lie at residues 510 to 569 (LPHL…DNIN), 609 to 631 (QSID…VSND), and 647 to 671 (NKNN…NSGS). Gly residues predominate over residues 615–626 (GGSGGGSGGGNG). A coiled-coil region spans residues 690–729 (CIKKYNSLKDSYLELKQKYQEEREKRLELEKELERYRLSS). The disordered stretch occupies residues 748 to 786 (NINSNNSTTTTTTTTTTTTTPIPLSTSNNNNNNNNNSTL). Residues 812–840 (YEKRVKWKENTEKEANQQLEVIKSKIDLF) are a coiled coil. Disordered regions lie at residues 861–881 (SENI…QNPQ), 905–927 (LTPR…PIPL), 963–991 (TPQK…SKST), 1006–1096 (SGHF…RLGK), and 1143–1194 (NGAN…SERI). Residues 870 to 881 (QQQQQQQQQNPQ) show a composition bias toward low complexity. Residues 905–915 (LTPRKSRENSV) are compositionally biased toward basic and acidic residues. Low complexity-rich tracts occupy residues 971–981 (PQQQQQQQPPQ), 1012–1030 (SSSN…FSNN), 1043–1079 (QHQQ…LQTQ), and 1143–1153 (NGANNLGGLVL). The stretch at 1151–1228 (LVLTSDKEKE…KKHKKIKGLF (78 aa)) forms a coiled coil. Residues 1155-1194 (SDKEKEKLEKEREKSERIEREKQEKEREKLEKEREKSERI) are compositionally biased toward basic and acidic residues. A Rho-GAP domain is found at 1233-1411 (SNKESLPFRR…TFIEDFHYIF (179 aa)). The segment at 1425–1482 (DDDYDSSSFGSNNTPSSHSPHSSSPTLNPAVTTTTTTTTTTNTTTTTNTTTTPTSATI) is disordered. A compositionally biased stretch (low complexity) spans 1430-1476 (SSSFGSNNTPSSHSPHSSSPTLNPAVTTTTTTTTTTNTTTTTNTTTT).

The protein resides in the cytoplasm. In terms of biological role, rho GTPase-activating protein involved in the signal transduction pathway. This chain is Rho GTPase-activating protein gacHH (gacHH), found in Dictyostelium discoideum (Social amoeba).